Here is a 78-residue protein sequence, read N- to C-terminus: Sec-independent protein translocase protein TatA (78 aa).

The chain crosses the membrane as a helical span at residues 1 to 21 (MGSLSIWHWIVVIGVVLLLFG). Basic and acidic residues predominate over residues 42–60 (GLQDDEKTAEKPEPVKSID). The segment at 42–78 (GLQDDEKTAEKPEPVKSIDHTAPPAAAPRTDVGSKVV) is disordered.

It belongs to the TatA/E family. The Tat system comprises two distinct complexes: a TatABC complex, containing multiple copies of TatA, TatB and TatC subunits, and a separate TatA complex, containing only TatA subunits. Substrates initially bind to the TatABC complex, which probably triggers association of the separate TatA complex to form the active translocon.

The protein resides in the cell inner membrane. Its function is as follows. Part of the twin-arginine translocation (Tat) system that transports large folded proteins containing a characteristic twin-arginine motif in their signal peptide across membranes. TatA could form the protein-conducting channel of the Tat system. This Rhodopseudomonas palustris (strain BisB18) protein is Sec-independent protein translocase protein TatA.